Reading from the N-terminus, the 221-residue chain is Ras-related protein Rab-27A (221 aa).

The residue at position 2 (Ser-2) is an N-acetylserine. Residue Ser-2 is modified to Phosphoserine. Gly-16–Ser-24 is a binding site for GTP. The Effector region motif lies at Phe-38 to Phe-46. GTP-binding positions include Asp-74–Gln-78, Asn-133–Asp-136, and Ser-163–Ala-165. Cysteines 123 and 188 form a disulfide. A disordered region spans residues Asn-202–Cys-221. Positions Asn-211 to Cys-221 are enriched in basic and acidic residues. S-geranylgeranyl cysteine attachment occurs at residues Cys-219 and Cys-221. Cys-221 is modified (cysteine methyl ester).

Belongs to the small GTPase superfamily. Rab family. As to quaternary structure, binds SYTL1, SLAC2B, MYRIP, SYTL3, SYTL4 and SYTL5. Interacts with RPH3A and RPH3A. Binds MLPH and SYTL2. Interacts with UNC13D. Does not interact with the BLOC-3 complex (heterodimer of HPS1 and HPS4). Interacts (GDP-bound form preferentially) with DENND10.

The protein resides in the membrane. It is found in the melanosome. It localises to the late endosome. The protein localises to the lysosome. The enzyme catalyses GTP + H2O = GDP + phosphate + H(+). Regulated by guanine nucleotide exchange factors (GEFs) which promote the exchange of bound GDP for free GTP, GTPase activating proteins (GAPs) which increase the GTP hydrolysis activity, and GDP dissociation inhibitors which inhibit the dissociation of the nucleotide from the GTPase. Activated by GEFs such as DENND10. In terms of biological role, small GTPase which cycles between active GTP-bound and inactive GDP-bound states. In its active state, binds to a variety of effector proteins to regulate homeostasis of late endocytic pathway, including endosomal positioning, maturation and secretion. Plays a role in cytotoxic granule exocytosis in lymphocytes. Required for both granule maturation and granule docking and priming at the immunologic synapse. The polypeptide is Ras-related protein Rab-27A (RAB27A) (Sus scrofa (Pig)).